Consider the following 99-residue polypeptide: Ubiquitin-related modifier 1 (99 aa).

1-thioglycine is present on glycine 99. A Glycyl lysine isopeptide (Gly-Lys) (interchain with K-? in acceptor proteins) cross-link involves residue glycine 99.

The protein belongs to the URM1 family. Homodimer; homodimerization may provide an autoprotection to the highly active C-terminal residue before attacking its substrates. Interacts with NCS2 and NCS6. Forms a conjugate with the target protein AHP1. In terms of processing, C-terminal thiocarboxylation occurs in 2 steps, it is first acyl-adenylated (-COAMP) via the hesA/moeB/thiF part of UBA4, then thiocarboxylated (-COSH) via the rhodanese domain of UBA4.

The protein resides in the cytoplasm. The protein localises to the nucleus. It functions in the pathway tRNA modification; 5-methoxycarbonylmethyl-2-thiouridine-tRNA biosynthesis. In terms of biological role, acts as a sulfur carrier required for 2-thiolation of mcm(5)S(2)U at tRNA wobble positions of cytosolic tRNA(Lys), tRNA(Glu) and tRNA(Gln). Serves as sulfur donor in tRNA 2-thiolation reaction by being thiocarboxylated (-COSH) at its C-terminus by the MOCS3 homolog UBA4. The sulfur is then transferred to tRNA to form 2-thiolation of mcm(5)S(2)U. Prior mcm(5) tRNA modification by the elongator complex is required for 2-thiolation. Also acts as a ubiquitin-like protein (UBL) that is covalently conjugated via an isopeptide bond to lysine residues of target proteins such as AHP1. The thiocarboxylated form serves as substrate for conjugation and oxidative stress specifically induces the formation of UBL-protein conjugates. This chain is Ubiquitin-related modifier 1, found in Saccharomyces cerevisiae (strain RM11-1a) (Baker's yeast).